The chain runs to 262 residues: L-aspartate dehydrogenase (262 aa).

NAD(+) is bound by residues alanine 128 and asparagine 183. The active site involves histidine 213.

The protein belongs to the L-aspartate dehydrogenase family.

It catalyses the reaction L-aspartate + NADP(+) + H2O = oxaloacetate + NH4(+) + NADPH + H(+). The catalysed reaction is L-aspartate + NAD(+) + H2O = oxaloacetate + NH4(+) + NADH + H(+). Its pathway is cofactor biosynthesis; NAD(+) biosynthesis; iminoaspartate from L-aspartate (dehydrogenase route): step 1/1. Specifically catalyzes the NAD or NADP-dependent dehydrogenation of L-aspartate to iminoaspartate. The chain is L-aspartate dehydrogenase from Methanopyrus kandleri (strain AV19 / DSM 6324 / JCM 9639 / NBRC 100938).